A 399-amino-acid polypeptide reads, in one-letter code: Elongation factor Tu (399 aa).

The tr-type G domain maps to Lys10–Gln209. Positions Gly19 to Thr26 are G1. Gly19 to Thr26 contacts GTP. Thr26 lines the Mg(2+) pocket. The interval Gly60–Ala64 is G2. Residues Asp81–Gly84 are G3. Residues Asp81–His85 and Asn136–Asp139 each bind GTP. The G4 stretch occupies residues Asn136–Asp139. Positions Ser174 to Leu176 are G5.

This sequence belongs to the TRAFAC class translation factor GTPase superfamily. Classic translation factor GTPase family. EF-Tu/EF-1A subfamily. In terms of assembly, monomer.

It is found in the cytoplasm. It catalyses the reaction GTP + H2O = GDP + phosphate + H(+). Its function is as follows. GTP hydrolase that promotes the GTP-dependent binding of aminoacyl-tRNA to the A-site of ribosomes during protein biosynthesis. This Helicobacter hepaticus (strain ATCC 51449 / 3B1) protein is Elongation factor Tu.